Consider the following 377-residue polypeptide: Cilia- and flagella-associated protein 263 (377 aa).

Coiled coils occupy residues 95–243 and 280–354; these read LTAD…NQEL and LRKE…SLKG.

Belongs to the CFAP263 family. In terms of assembly, forms a complex with CFAP184; the interaction is required for functional activity in cilia. Interacts with HAP1 and PCM1.

It localises to the cytoplasm. The protein resides in the cytoskeleton. Its subcellular location is the microtubule organizing center. It is found in the centrosome. The protein localises to the centriolar satellite. It localises to the cell projection. The protein resides in the cilium. Component of centriolar satellites contributing to primary cilium formation. In complex with CFAP263, acts as a regulator of ciliary beating that connects radial spoke 3 (RS3) to the inner dynein arm (IDA) and the nexin-dynein regulatory complex (N-DRC). The complex is positioned parallel to N-DRC and forms a connection between the arch at the base of RS3, the IDA tail and N-DRC. This is Cilia- and flagella-associated protein 263 from Homo sapiens (Human).